Consider the following 198-residue polypeptide: ATP-dependent Clp protease proteolytic subunit 1 (198 aa).

Catalysis depends on Ser-96, which acts as the Nucleophile. His-121 is a catalytic residue.

This sequence belongs to the peptidase S14 family. In terms of assembly, fourteen ClpP subunits assemble into 2 heptameric rings which stack back to back to give a disk-like structure with a central cavity, resembling the structure of eukaryotic proteasomes.

It localises to the cytoplasm. It catalyses the reaction Hydrolysis of proteins to small peptides in the presence of ATP and magnesium. alpha-casein is the usual test substrate. In the absence of ATP, only oligopeptides shorter than five residues are hydrolyzed (such as succinyl-Leu-Tyr-|-NHMec, and Leu-Tyr-Leu-|-Tyr-Trp, in which cleavage of the -Tyr-|-Leu- and -Tyr-|-Trp bonds also occurs).. In terms of biological role, cleaves peptides in various proteins in a process that requires ATP hydrolysis. Has a chymotrypsin-like activity. Plays a major role in the degradation of misfolded proteins. This is ATP-dependent Clp protease proteolytic subunit 1 from Synechocystis sp. (strain ATCC 27184 / PCC 6803 / Kazusa).